A 388-amino-acid polypeptide reads, in one-letter code: Galactokinase (388 aa).

33–36 (EHTD) contributes to the substrate binding site. ATP is bound by residues Ser67 and 124–130 (GSGLSSS). Residues Ser130 and Glu162 each coordinate Mg(2+). Asp174 serves as the catalytic Proton acceptor. Tyr224 lines the substrate pocket.

Belongs to the GHMP kinase family. GalK subfamily.

It is found in the cytoplasm. It catalyses the reaction alpha-D-galactose + ATP = alpha-D-galactose 1-phosphate + ADP + H(+). It participates in carbohydrate metabolism; galactose metabolism. Its function is as follows. Catalyzes the transfer of the gamma-phosphate of ATP to D-galactose to form alpha-D-galactose-1-phosphate (Gal-1-P). In Streptococcus thermophilus, this protein is Galactokinase.